The following is a 422-amino-acid chain: Enolase (422 aa).

Gln-162 is a binding site for (2R)-2-phosphoglycerate. The active-site Proton donor is the Glu-204. Mg(2+) is bound by residues Asp-241, Glu-284, and Asp-311. (2R)-2-phosphoglycerate contacts are provided by Lys-336, Arg-365, Ser-366, and Lys-387. Catalysis depends on Lys-336, which acts as the Proton acceptor.

The protein belongs to the enolase family. Component of the RNA degradosome, a multiprotein complex involved in RNA processing and mRNA degradation. It depends on Mg(2+) as a cofactor.

Its subcellular location is the cytoplasm. It is found in the secreted. The protein localises to the cell surface. It carries out the reaction (2R)-2-phosphoglycerate = phosphoenolpyruvate + H2O. It participates in carbohydrate degradation; glycolysis; pyruvate from D-glyceraldehyde 3-phosphate: step 4/5. In terms of biological role, catalyzes the reversible conversion of 2-phosphoglycerate (2-PG) into phosphoenolpyruvate (PEP). It is essential for the degradation of carbohydrates via glycolysis. This is Enolase from Legionella pneumophila (strain Lens).